The sequence spans 159 residues: UPF0262 protein TM1040_3562 (159 aa).

Positions 1-21 (MSRISQIELDDRNLPPPTPEI) are disordered.

The protein belongs to the UPF0262 family.

In Ruegeria sp. (strain TM1040) (Silicibacter sp.), this protein is UPF0262 protein TM1040_3562.